The chain runs to 866 residues: Coiled-coil domain-containing protein 178 (866 aa).

Residues methionine 1–glycine 21 are disordered. Coiled-coil stretches lie at residues glutamate 157 to alanine 266, glutamate 292 to cysteine 403, lysine 439 to valine 480, lysine 514 to leucine 539, arginine 570 to lysine 631, and glutamate 665 to valine 705.

The chain is Coiled-coil domain-containing protein 178 (Ccdc178) from Mus musculus (Mouse).